The chain runs to 470 residues: MEEHYYVSIDIGSSSVKTIVGEKFHNGINVIGTGQTYTSGIKNGLIDDFDIARQAIKDTIKKASIASGVDIKEVFLKLPIIGTEVYDESNEIDFYEDTEINGSHIEKVLEGIREKNDVQETEVINVFPIRFIVDKENEVSDPKELIARHSLKVEAGVIAIQKSILINMIKCVEACGVDVLDVYSDAYNYGSILTATEKELGACVIDIGEDVTQVAFYERGELVDADSIEMAGRDITDDIAQGLNTSYETAEKVKHQYGHAFYDSASDQDIFTVEQVDSDETVQYTQKDLSDFIEARVEEIFFEVFDVLQDLGLTKVNGGFIVTGGSANLLGVKELLSDMVSEKVRIHTPSQMGIRKPEFSSAISTISSSIAFDELLDYVTINYHDSEETEEDVIDVKDKDNESKLGGFDWFKRKTNKKDTHENEVESTDEEIYQSEDNHQEHKQNHEHVQDKDKDKEESKFKKLMKSLFE.

Residues 416-470 form a disordered region; it reads NKKDTHENEVESTDEEIYQSEDNHQEHKQNHEHVQDKDKDKEESKFKKLMKSLFE. Acidic residues predominate over residues 425 to 434; sequence VESTDEEIYQ. Over residues 436 to 461 the composition is skewed to basic and acidic residues; sequence EDNHQEHKQNHEHVQDKDKDKEESKF.

This sequence belongs to the FtsA/MreB family. Self-interacts. Interacts with FtsZ.

The protein resides in the cell membrane. Functionally, cell division protein that is involved in the assembly of the Z ring. May serve as a membrane anchor for the Z ring. This Staphylococcus aureus (strain MSSA476) protein is Cell division protein FtsA.